Reading from the N-terminus, the 395-residue chain is MTENIIESGDPQARYDSVIEKDSKYVMQTYGRQPLVLSKGKGAVVQDIYGKEYIDCVAGIAVNNVGHCHPTVVKAIQAQAENLIHVSNLYYTEIQAEFAETLASITGMERVFFCNSGAESVEAAMKLARVATGKSAFVAAEHSFHGRTIGALSVTHKSMYRDPFMPPVSSETTFVPYSDAEAIRQAISENTAAVILEPIQGEGGINIPDPGYLKEVREICDETGALLIFDEVQTGFGRTGTWFCKEQFGVEPDIMSMSKAIGGGFPMGAIAAHNGINFGRGQHASTFGGGPLACAAALASVKVIREEKLLERSKEMGAYFMKKLAGMVRDDVVEVRGKGLMIGVEIKYPCGKFVDFAREQGVLVNCTSDSVLRLVPPLVITKEQIDTVVDVLEQA.

Pyridoxal 5'-phosphate-binding positions include 117 to 118 (GA) and phenylalanine 144. Arginine 147 provides a ligand contact to N(2)-acetyl-L-ornithine. Residue 230 to 233 (DEVQ) participates in pyridoxal 5'-phosphate binding. An N6-(pyridoxal phosphate)lysine modification is found at lysine 259. Position 285 (serine 285) interacts with N(2)-acetyl-L-ornithine. Threonine 286 contributes to the pyridoxal 5'-phosphate binding site.

The protein belongs to the class-III pyridoxal-phosphate-dependent aminotransferase family. ArgD subfamily. As to quaternary structure, homodimer. It depends on pyridoxal 5'-phosphate as a cofactor.

It is found in the cytoplasm. It carries out the reaction N(2)-acetyl-L-ornithine + 2-oxoglutarate = N-acetyl-L-glutamate 5-semialdehyde + L-glutamate. Its pathway is amino-acid biosynthesis; L-arginine biosynthesis; N(2)-acetyl-L-ornithine from L-glutamate: step 4/4. This Methanosarcina acetivorans (strain ATCC 35395 / DSM 2834 / JCM 12185 / C2A) protein is Acetylornithine aminotransferase.